Consider the following 769-residue polypeptide: Discoidin, CUB and LCCL domain-containing protein 2 (769 aa).

Residues 1–29 (MASRAPLRAARSPQDPGGRAAPAATGRAP) show a composition bias toward low complexity. A disordered region spans residues 1–39 (MASRAPLRAARSPQDPGGRAAPAATGRAPLPSAGWCPLP). Residues 1–63 (MASRAPLRAA…LLLLLPDAGA (63 aa)) form the signal peptide. Residues 64–523 (QKGDGCGHTV…VTPSVTKDVA (460 aa)) are Extracellular-facing. Disulfide bonds link cysteine 69/cysteine 96 and cysteine 123/cysteine 145. One can recognise a CUB domain in the interval 69–184 (CGHTVLGPES…RGFLASYSVI (116 aa)). Asparagine 92 is a glycosylation site (N-linked (GlcNAc...) asparagine). A glycan (N-linked (GlcNAc...) asparagine) is linked at asparagine 152. The LCCL domain maps to 184–282 (IDKQDLITCL…MVGYLSTSLF (99 aa)). A disulfide bond links cysteine 212 and cysteine 234. An N-linked (GlcNAc...) asparagine glycan is attached at asparagine 269. A disulfide bridge links cysteine 289 with cysteine 446. An F5/8 type C domain is found at 289-446 (CYGTLGMESG…IAMKVELLGC (158 aa)). Residues 455-476 (PKLTQPPPPRNSNNLKNTTVHP) are disordered. Polar residues predominate over residues 465 to 474 (NSNNLKNTTV). N-linked (GlcNAc...) asparagine glycans are attached at residues asparagine 471 and asparagine 511. Residues 524–544 (LAAVLVPVLVMALTTLILILV) form a helical membrane-spanning segment. The Cytoplasmic portion of the chain corresponds to 545 to 769 (CAWHWRNRKK…EKFDAFKETL (225 aa)). Serine 601 carries the post-translational modification Phosphoserine. Residues 719 to 769 (SCSSGQAQYDTPKGGKPAAAPEELVYQVPQSTQEASGAGRDEKFDAFKETL) form a disordered region. Positions 757–769 (GRDEKFDAFKETL) are enriched in basic and acidic residues.

The protein resides in the membrane. The chain is Discoidin, CUB and LCCL domain-containing protein 2 (Dcbld2) from Rattus norvegicus (Rat).